The primary structure comprises 377 residues: O-phospho-L-seryl-tRNA:Cys-tRNA synthase (377 aa).

Pyridoxal 5'-phosphate is bound by residues 82-83 (AR), Asn-189, and 212-214 (SGH). Lys-215 carries the post-translational modification N6-(pyridoxal phosphate)lysine.

Belongs to the SepCysS family. Homodimer. Interacts with SepRS. Pyridoxal 5'-phosphate is required as a cofactor.

It carries out the reaction O-phospho-L-seryl-tRNA(Cys) + hydrogen sulfide + H(+) = L-cysteinyl-tRNA(Cys) + phosphate. Functionally, converts O-phospho-L-seryl-tRNA(Cys) (Sep-tRNA(Cys)) to L-cysteinyl-tRNA(Cys) (Cys-tRNA(Cys)). The polypeptide is O-phospho-L-seryl-tRNA:Cys-tRNA synthase (Methanocaldococcus jannaschii (strain ATCC 43067 / DSM 2661 / JAL-1 / JCM 10045 / NBRC 100440) (Methanococcus jannaschii)).